The following is a 253-amino-acid chain: Ribonuclease PH (253 aa).

Residues R86 and G124–R126 contribute to the phosphate site.

It belongs to the RNase PH family. In terms of assembly, homohexameric ring arranged as a trimer of dimers.

It catalyses the reaction tRNA(n+1) + phosphate = tRNA(n) + a ribonucleoside 5'-diphosphate. In terms of biological role, phosphorolytic 3'-5' exoribonuclease that plays an important role in tRNA 3'-end maturation. Removes nucleotide residues following the 3'-CCA terminus of tRNAs; can also add nucleotides to the ends of RNA molecules by using nucleoside diphosphates as substrates, but this may not be physiologically important. Probably plays a role in initiation of 16S rRNA degradation (leading to ribosome degradation) during starvation. In Brevibacillus brevis (strain 47 / JCM 6285 / NBRC 100599), this protein is Ribonuclease PH.